A 1058-amino-acid polypeptide reads, in one-letter code: Outer capsid protein VP4 (1058 aa).

This sequence belongs to the orthoreovirus lambda-2 protein family.

It localises to the virion. It catalyses the reaction a 5'-end diphospho-ribonucleoside in mRNA + GTP + H(+) = a 5'-end (5'-triphosphoguanosine)-ribonucleoside in mRNA + diphosphate. It carries out the reaction a 5'-end (5'-triphosphoguanosine)-ribonucleoside in mRNA + S-adenosyl-L-methionine = a 5'-end (N(7)-methyl 5'-triphosphoguanosine)-ribonucleoside in mRNA + S-adenosyl-L-homocysteine. Functionally, outer capsid protein involved in mRNA capping. Catalyzes the last 3 enzymatic activities for formation of the 5' cap structure on the viral plus-strand transcripts, namely the RNA guanylyltransferase, RNA-7N- and RNA-2'O-methyltransferase activities. This Lymantria dispar cypovirus 1 (isolate Rao) (LdCPV-1) protein is Outer capsid protein VP4 (S4).